We begin with the raw amino-acid sequence, 358 residues long: MKQIQVDLGVRSYPIYIGQNLMSDGETLSRYLLKKRILIVTNETVAPLYLKQIQETMASFGEVESVILPDGEQFKDLAHLDTIFTALLQQNYGRDSVLVALGGGVIGDMTGFAAACYQRGIDFIQIPTTLLSQVDSSVGGKTAVNHPLGKNMIGAFYQPQIVLIDTLCLHTLPAREFAAGMAEVIKYGIMWDADFFQWLEDNVTALKTLDAQALVYAISRCCEIKADVVSQDETEQGVRALLNLGHTFGHAIEAEMGYGNWLHGEAVSAGTVLAAQTAKALGLIDESIVCRIIQLLQAFDLPVRAPESMDFDSFIQHMRRDKKVLGGQIRLVLPTAIGRADVFSQVTESTLEQVIRCA.

NAD(+)-binding positions include 70–75 (DGEQFK), 104–108 (GVIGD), 128–129 (TT), K141, K150, and 168–171 (CLHT). Positions 183, 246, and 263 each coordinate Zn(2+).

This sequence belongs to the sugar phosphate cyclases superfamily. Dehydroquinate synthase family. It depends on Co(2+) as a cofactor. Zn(2+) is required as a cofactor. NAD(+) serves as cofactor.

The protein localises to the cytoplasm. It carries out the reaction 7-phospho-2-dehydro-3-deoxy-D-arabino-heptonate = 3-dehydroquinate + phosphate. It functions in the pathway metabolic intermediate biosynthesis; chorismate biosynthesis; chorismate from D-erythrose 4-phosphate and phosphoenolpyruvate: step 2/7. Catalyzes the conversion of 3-deoxy-D-arabino-heptulosonate 7-phosphate (DAHP) to dehydroquinate (DHQ). The chain is 3-dehydroquinate synthase from Shewanella baltica (strain OS155 / ATCC BAA-1091).